The following is a 212-amino-acid chain: ATP-dependent dethiobiotin synthetase BioD (212 aa).

13–18 (GVGKTV) serves as a coordination point for ATP. Threonine 17 serves as a coordination point for Mg(2+). Lysine 33 is an active-site residue. Residue glutamate 100 coordinates Mg(2+). ATP-binding positions include 100–103 (EGAG) and 184–186 (PHL).

The protein belongs to the dethiobiotin synthetase family. As to quaternary structure, homodimer. It depends on Mg(2+) as a cofactor.

It localises to the cytoplasm. The enzyme catalyses (7R,8S)-7,8-diammoniononanoate + CO2 + ATP = (4R,5S)-dethiobiotin + ADP + phosphate + 3 H(+). The protein operates within cofactor biosynthesis; biotin biosynthesis; biotin from 7,8-diaminononanoate: step 1/2. In terms of biological role, catalyzes a mechanistically unusual reaction, the ATP-dependent insertion of CO2 between the N7 and N8 nitrogen atoms of 7,8-diaminopelargonic acid (DAPA, also called 7,8-diammoniononanoate) to form a ureido ring. This Rhodopseudomonas palustris (strain BisB5) protein is ATP-dependent dethiobiotin synthetase BioD.